The primary structure comprises 336 residues: Phospho-N-acetylmuramoyl-pentapeptide-transferase (336 aa).

Helical transmembrane passes span 3–23 (LTLIAAIISFMVSAFTMPYFI), 53–73 (GGTVFLLVATAVSLLVSLFSI), 78–98 (SLALISGILSIVVIYGIIGFL), 118–138 (LALQLAGGLMFYFLHVSPSGI), 143–163 (VFGYQLSLGIFYLFFVLFWVV), 174–194 (GIDGLASISVVISLVTYGVIA), 200–220 (FDVLLLIGAMIGALLGFFCFN), 226–246 (VFMGDVGSLALGAMLAAISIA), 251–271 (WTLLIIGIVYVLETSSVMLQV), and 316–336 (AFLWGVGSLASLLVLAILYVF).

It belongs to the glycosyltransferase 4 family. MraY subfamily. Requires Mg(2+) as cofactor.

It localises to the cell membrane. The catalysed reaction is UDP-N-acetyl-alpha-D-muramoyl-L-alanyl-gamma-D-glutamyl-L-lysyl-D-alanyl-D-alanine + di-trans,octa-cis-undecaprenyl phosphate = Mur2Ac(oyl-L-Ala-gamma-D-Glu-L-Lys-D-Ala-D-Ala)-di-trans,octa-cis-undecaprenyl diphosphate + UMP. It participates in cell wall biogenesis; peptidoglycan biosynthesis. Catalyzes the initial step of the lipid cycle reactions in the biosynthesis of the cell wall peptidoglycan: transfers peptidoglycan precursor phospho-MurNAc-pentapeptide from UDP-MurNAc-pentapeptide onto the lipid carrier undecaprenyl phosphate, yielding undecaprenyl-pyrophosphoryl-MurNAc-pentapeptide, known as lipid I. The protein is Phospho-N-acetylmuramoyl-pentapeptide-transferase of Streptococcus pyogenes serotype M3 (strain ATCC BAA-595 / MGAS315).